Here is a 390-residue protein sequence, read N- to C-terminus: Digeranylgeranylglycerophospholipid reductase (390 aa).

The FAD site is built by A18, E37, C48, A49, A51, R98, V122, D278, G290, and I291. V368 serves as a coordination point for a 2,3-bis-O-(geranylgeranyl)-sn-glycerol 1-phospholipid.

This sequence belongs to the geranylgeranyl reductase family. DGGGPL reductase subfamily. FAD serves as cofactor.

It catalyses the reaction a 2,3-bis-O-phytanyl-sn-glycerol 1-phospholipid + 8 A = a 2,3-bis-O-(geranylgeranyl)-sn-glycerol 1-phospholipid + 8 AH2. The catalysed reaction is 2,3-bis-O-(phytanyl)-sn-glycerol 1-phosphate + 8 A = 2,3-bis-O-(geranylgeranyl)-sn-glycerol 1-phosphate + 8 AH2. It carries out the reaction CDP-2,3-bis-O-(geranylgeranyl)-sn-glycerol + 8 AH2 = CDP-2,3-bis-O-(phytanyl)-sn-glycerol + 8 A. The enzyme catalyses archaetidylserine + 8 AH2 = 2,3-bis-O-phytanyl-sn-glycero-3-phospho-L-serine + 8 A. Its pathway is membrane lipid metabolism; glycerophospholipid metabolism. Is involved in the reduction of 2,3-digeranylgeranylglycerophospholipids (unsaturated archaeols) into 2,3-diphytanylglycerophospholipids (saturated archaeols) in the biosynthesis of archaeal membrane lipids. Catalyzes the formation of archaetidic acid (2,3-di-O-phytanyl-sn-glyceryl phosphate) from 2,3-di-O-geranylgeranylglyceryl phosphate (DGGGP) via the hydrogenation of each double bond of the isoprenoid chains. Is also probably able to reduce double bonds of geranyl groups in CDP-2,3-bis-O-(geranylgeranyl)-sn-glycerol and archaetidylserine, thus acting at various stages in the biosynthesis of archaeal membrane lipids. The protein is Digeranylgeranylglycerophospholipid reductase of Methanococcus maripaludis (strain C5 / ATCC BAA-1333).